Consider the following 125-residue polypeptide: Protein Turandot F (125 aa).

An N-terminal signal peptide occupies residues 1 to 19; the sequence is MKTVILFGFLLALLGYLEA.

The protein belongs to the Turandot family.

It localises to the secreted. A humoral factor that may play a role in stress tolerance. This is Protein Turandot F from Drosophila melanogaster (Fruit fly).